The following is a 156-amino-acid chain: MSRRHKAEKREINPDPKFGDLVITKFMNAVMLHGKKSVAESIVYGALDAIEAKAKSEPVALFHQALDNVAPHIEVRSRRVGGATYQVPVDVRPERRQALAIRWLINAARGRNETTMVDRLSGELLDAANNRGSAVKKREDTHRMAEANRAFSHYRW.

This sequence belongs to the universal ribosomal protein uS7 family. As to quaternary structure, part of the 30S ribosomal subunit. Contacts proteins S9 and S11.

In terms of biological role, one of the primary rRNA binding proteins, it binds directly to 16S rRNA where it nucleates assembly of the head domain of the 30S subunit. Is located at the subunit interface close to the decoding center, probably blocks exit of the E-site tRNA. The chain is Small ribosomal subunit protein uS7 from Brucella abortus (strain S19).